We begin with the raw amino-acid sequence, 23 residues long: Augerpeptide hhe7a (23 aa).

3 cysteine pairs are disulfide-bonded: Cys3–Cys11, Cys6–Cys19, and Cys10–Cys22.

As to expression, expressed by the venom duct.

It localises to the secreted. Functionally, causes abnormal twist followed by immobility when injected into C.elegans. The chain is Augerpeptide hhe7a from Hastula hectica (Sea snail).